A 53-amino-acid chain; its full sequence is Large ribosomal subunit protein bL33 (53 aa).

This sequence belongs to the bacterial ribosomal protein bL33 family.

The chain is Large ribosomal subunit protein bL33 from Ureaplasma parvum serovar 3 (strain ATCC 27815 / 27 / NCTC 11736).